Consider the following 894-residue polypeptide: Histone-lysine N-methyltransferase PRDM9 (894 aa).

Disordered regions lie at residues 1 to 23 (MSPE…RKPM) and 143 to 174 (SGSE…LRKK). Positions 23–86 (MVKDAFKDIS…RRQAIKLQVD (64 aa)) constitute a KRAB-related domain. Over residues 143 to 164 (SGSEQAQKPVSPSGEASTSGQH) the composition is skewed to polar residues. 4 residues coordinate Zn(2+): Cys205, Cys208, Cys216, and His219. Residues 244–358 (PGLRIGPSGI…PGCELLVWYG (115 aa)) enclose the SET domain. S-adenosyl-L-methionine contacts are provided by residues 256–258 (AGL), Tyr291, and 320–321 (NC). Substrate is bound at residue 288–294 (NNGYSWL). Position 357 (Tyr357) interacts with substrate. Lys368 carries the post-translational modification N6,N6,N6-trimethyllysine; alternate. Lys368 carries the post-translational modification N6-methyllysine; alternate. Residues Lys372 and Lys374 each carry the N6-methyllysine modification. Residues 388–411 (HPCPSCCLAFSSQKFLSQHVERNH) form a C2H2-type 1 zinc finger. Residues Cys390, Cys393, His406, and His411 each coordinate Zn(2+). The disordered stretch occupies residues 408-469 (ERNHSSQNFP…SKLLNKRTWQ (62 aa)). Over residues 444–461 (PHSRNDKTKGQEIKERSK) the composition is skewed to basic and acidic residues. Residues 524-546 (VKYGECGQGFSVKSDVITHQRTH) form a C2H2-type 2; degenerate zinc finger. 12 consecutive C2H2-type zinc fingers follow at residues 552–574 (YVCR…QRIH), 580–602 (YVCR…QRTH), 608–630 (YVCR…QRRH), 636–658 (YVCR…QRRH), 664–686 (YVCR…QRTH), 692–714 (YVCR…QRTH), 720–742 (YVCR…QRTH), 748–770 (YVCR…QRTH), 776–798 (YVCR…QRTH), 804–826 (YVCR…QRTH), 832–854 (YVCR…QRTH), and 860–882 (YVCR…QRTH). The Zn(2+) site is built by Cys722, Cys725, His738, His742, Cys750, Cys753, His766, His770, Cys778, Cys781, His794, His798, Cys806, Cys809, His822, and His826. The interval 730–820 (SNKSHLLRHQ…RGFSNKSHLL (91 aa)) is DNA-binding.

This sequence belongs to the class V-like SAM-binding methyltransferase superfamily. Homodimer. Interacts with EHMT2 and CDYL; interaction only takes place when PRDM9 is bound to hotspot DNA. Interacts with CXXC1; this interaction does not link PRDM9-activated recombination hotspot sites with DSB machinery and is not required for the hotspot recognition pathway. Forms a complex with EWSR1, REC8, SYCP3 and SYCP1; complex formation is dependent of phosphorylated form of REC8 and requires PRDM9 bound to hotspot DNA; EWSR1 joins PRDM9 with the chromosomal axis through REC8. In terms of processing, mono-methylated; automethylated. Tri-methylated; automethylated. Mono-methylation is predominant; automethylation is lower and slower than H3 peptide methylation and is in a highest S-adenosyl-L-methionine concentration-dependent. There are two major sites for automethylation at Lys-368 and Lys-374. Lysines can be simultaneously methylated, such as Lys-368(me3)/Lys-372(me1), Lys-368(me1)/Lys-374(me1) and Lys-368(me1)/Lys-372(me1)/Lys-374(me1). Automethylation is an intramolecular (cis) process.

It is found in the nucleus. Its subcellular location is the chromosome. The enzyme catalyses L-lysyl-[protein] + S-adenosyl-L-methionine = N(6)-methyl-L-lysyl-[protein] + S-adenosyl-L-homocysteine + H(+). The catalysed reaction is N(6)-methyl-L-lysyl-[protein] + S-adenosyl-L-methionine = N(6),N(6)-dimethyl-L-lysyl-[protein] + S-adenosyl-L-homocysteine + H(+). It carries out the reaction L-lysyl(4)-[histone H3] + 3 S-adenosyl-L-methionine = N(6),N(6),N(6)-trimethyl-L-lysyl(4)-[histone H3] + 3 S-adenosyl-L-homocysteine + 3 H(+). It catalyses the reaction L-lysyl(36)-[histone H3] + 3 S-adenosyl-L-methionine = N(6),N(6),N(6)-trimethyl-L-lysyl(36)-[histone H3] + 3 S-adenosyl-L-homocysteine + 3 H(+). The enzyme catalyses L-lysyl(9)-[histone H3] + 3 S-adenosyl-L-methionine = N(6),N(6),N(6)-trimethyl-L-lysyl(9)-[histone H3] + 3 S-adenosyl-L-homocysteine + 3 H(+). The catalysed reaction is L-lysyl(20)-[histone H4] + S-adenosyl-L-methionine = N(6)-methyl-L-lysyl(20)-[histone H4] + S-adenosyl-L-homocysteine + H(+). It carries out the reaction N(6)-methyl-L-lysyl(20)-[histone H4] + S-adenosyl-L-methionine = N(6),N(6)-dimethyl-L-lysyl(20)-[histone H4] + S-adenosyl-L-homocysteine + H(+). Its activity is regulated as follows. Inhibited by suramin with an IC(50) of 4.1 uM. Functionally, histone methyltransferase that sequentially mono-, di-, and tri-methylates both 'Lys-4' (H3K4) and 'Lys-36' (H3K36) of histone H3 to produce respectively trimethylated 'Lys-4' (H3K4me3) and trimethylated 'Lys-36' (H3K36me3) histone H3 and plays a key role in meiotic prophase by determining hotspot localization thereby promoting meiotic recombination. Can also methylate all four core histones with H3 being the best substrate and the most highly modified. Is also able, on one hand, to mono and di-methylate H4K20 and on other hand to trimethylate H3K9 with the di-methylated H3K9 as the best substrate. During meiotic prophase, binds specific DNA sequences through its zinc finger domains thereby determining hotspot localization where it promotes local H3K4me3 and H3K36me3 enrichment on the same nucleosomes through its histone methyltransferase activity. Thereby promotes double-stranded breaks (DSB) formation, at this subset of PRDM9-binding sites, that initiates meiotic recombination for the proper meiotic progression. During meiotic progression hotspot-bound PRDM9 interacts with several complexes; in early leptonema binds CDYL and EHMT2 followed by EWSR1 and CXXC1 by the end of leptonema. EWSR1 joins PRDM9 with the chromosomal axis through REC8. In this way, controls the DSB repair pathway, pairing of homologous chromosomes and sex body formation. Moreover plays a central role in the transcriptional activation of genes during early meiotic prophase thanks to H3K4me3 and H3K36me3 enrichment that represents a specific tag for epigenetic transcriptional activation. In addition performs automethylation. Acetylation and phosphorylation of histone H3 attenuate or prevent histone H3 methylation. In Homo sapiens (Human), this protein is Histone-lysine N-methyltransferase PRDM9.